Here is a 39-residue protein sequence, read N- to C-terminus: APERGLFLNLSAGELCVGSFQCKSSCCQRETGLSLARCA.

2 disulfide bridges follow: C16/C27 and C22/C38.

Belongs to the colipase family. In terms of assembly, forms a 1:1 stoichiometric complex with pancreatic lipase. Expressed by the pancreas.

It is found in the secreted. Functionally, colipase is a cofactor of pancreatic lipase. It allows the lipase to anchor itself to the lipid-water interface. Without colipase the enzyme is washed off by bile salts, which have an inhibitory effect on the lipase. The protein is Colipase of Squalus acanthias (Spiny dogfish).